The chain runs to 74 residues: Putative Fe(2+) transport protein A (74 aa).

This sequence belongs to the FeoA family.

Might be involved in Fe(2+) ion uptake. The chain is Putative Fe(2+) transport protein A from Campylobacter jejuni subsp. jejuni serotype O:2 (strain ATCC 700819 / NCTC 11168).